Consider the following 339-residue polypeptide: GTPase Obg (339 aa).

Residues 1–159 (MKFVDEAFVR…RELKLELKLL (159 aa)) form the Obg domain. Residues 127-147 (NTHFKSSTNRAPRRTTSGEEG) form a disordered region. One can recognise an OBG-type G domain in the interval 160–333 (ADVGLLGLPN…LCYDLMSFLE (174 aa)). GTP contacts are provided by residues 166–173 (GLPNAGKS), 191–195 (FTTLY), 213–216 (DIPG), 283–286 (NKID), and 314–316 (SAI). Positions 173 and 193 each coordinate Mg(2+).

The protein belongs to the TRAFAC class OBG-HflX-like GTPase superfamily. OBG GTPase family. In terms of assembly, monomer. The cofactor is Mg(2+).

Its subcellular location is the cytoplasm. Functionally, an essential GTPase which binds GTP, GDP and possibly (p)ppGpp with moderate affinity, with high nucleotide exchange rates and a fairly low GTP hydrolysis rate. Plays a role in control of the cell cycle, stress response, ribosome biogenesis and in those bacteria that undergo differentiation, in morphogenesis control. The protein is GTPase Obg of Coxiella burnetii (strain CbuG_Q212) (Coxiella burnetii (strain Q212)).